Consider the following 287-residue polypeptide: Co-chaperone protein DjlA (287 aa).

Residues 1 to 6 (MQIFGK) lie on the Periplasmic side of the membrane. A helical transmembrane segment spans residues 7 to 30 (ILGAFFGFLFGGVFGALFGLFIGH). Residues 31-287 (QFDKARRLSQ…DLIKKEKGFK (257 aa)) lie on the Cytoplasmic side of the membrane. The tract at residues 192–213 (GGFGGQQHQSHHSSSHGGWQQA) is disordered. In terms of domain architecture, J spans 221–287 (DAYKILGIDA…DLIKKEKGFK (67 aa)).

Homodimer.

The protein resides in the cell inner membrane. Functionally, regulatory DnaK co-chaperone. Direct interaction between DnaK and DjlA is needed for the induction of the wcaABCDE operon, involved in the synthesis of a colanic acid polysaccharide capsule, possibly through activation of the RcsB/RcsC phosphotransfer signaling pathway. The colanic acid capsule may help the bacterium survive conditions outside the host. This is Co-chaperone protein DjlA from Vibrio vulnificus (strain CMCP6).